A 90-amino-acid chain; its full sequence is MENVVITVVGVDKPGIVAEVTKVLAQNSANIVDIRQTIMEDLFTMIMLVDISKISSDFSELNVALEKLGSEIGVKINVQHENIFKYMHRI.

Residues 5–79 (VITVVGVDKP…SEIGVKINVQ (75 aa)) enclose the ACT domain.

The protein belongs to the UPF0237 family.

This Methanococcus maripaludis (strain DSM 14266 / JCM 13030 / NBRC 101832 / S2 / LL) protein is UPF0237 protein MMP0657.